Reading from the N-terminus, the 237-residue chain is Sugar fermentation stimulation protein homolog (237 aa).

Belongs to the SfsA family.

The sequence is that of Sugar fermentation stimulation protein homolog from Pseudomonas putida (strain ATCC 700007 / DSM 6899 / JCM 31910 / BCRC 17059 / LMG 24140 / F1).